Consider the following 132-residue polypeptide: Ribosome-binding factor A (132 aa).

The protein belongs to the RbfA family. As to quaternary structure, monomer. Binds 30S ribosomal subunits, but not 50S ribosomal subunits or 70S ribosomes.

The protein localises to the cytoplasm. Its function is as follows. One of several proteins that assist in the late maturation steps of the functional core of the 30S ribosomal subunit. Associates with free 30S ribosomal subunits (but not with 30S subunits that are part of 70S ribosomes or polysomes). Required for efficient processing of 16S rRNA. May interact with the 5'-terminal helix region of 16S rRNA. This Pectobacterium atrosepticum (strain SCRI 1043 / ATCC BAA-672) (Erwinia carotovora subsp. atroseptica) protein is Ribosome-binding factor A.